Consider the following 644-residue polypeptide: Probable potassium transport system protein Kup 2 (644 aa).

Residues 1 to 21 (MSSDAAAVADRDGSSPGHGGH) are disordered. A run of 12 helical transmembrane segments spans residues 26–46 (LGAM…TSPL), 69–89 (VLSL…VAII), 120–140 (IILL…ITPA), 155–175 (AGFA…LFMI), 183–203 (VGML…VLGT), 231–251 (LAFL…ALYA), 265–285 (WLVF…AMIL), 312–332 (LVIL…TGAF), 360–380 (IYIP…VMSF), 390–410 (YGIA…VVLI), 419–439 (LAAP…GANL), and 444–464 (DGGW…TTWG).

It belongs to the HAK/KUP transporter (TC 2.A.72) family.

It localises to the cell inner membrane. The catalysed reaction is K(+)(in) + H(+)(in) = K(+)(out) + H(+)(out). Transport of potassium into the cell. Likely operates as a K(+):H(+) symporter. The sequence is that of Probable potassium transport system protein Kup 2 from Rhizorhabdus wittichii (strain DSM 6014 / CCUG 31198 / JCM 15750 / NBRC 105917 / EY 4224 / RW1) (Sphingomonas wittichii).